Here is a 745-residue protein sequence, read N- to C-terminus: 1,4-alpha-glucan branching enzyme GlgB (745 aa).

Asp416 (nucleophile) is an active-site residue. Glu469 serves as the catalytic Proton donor.

It belongs to the glycosyl hydrolase 13 family. GlgB subfamily. Monomer.

The enzyme catalyses Transfers a segment of a (1-&gt;4)-alpha-D-glucan chain to a primary hydroxy group in a similar glucan chain.. The protein operates within glycan biosynthesis; glycogen biosynthesis. Its function is as follows. Catalyzes the formation of the alpha-1,6-glucosidic linkages in glycogen by scission of a 1,4-alpha-linked oligosaccharide from growing alpha-1,4-glucan chains and the subsequent attachment of the oligosaccharide to the alpha-1,6 position. The protein is 1,4-alpha-glucan branching enzyme GlgB of Shewanella sp. (strain MR-7).